Consider the following 320-residue polypeptide: Melanocyte-stimulating hormone receptor (320 aa).

Residues 1–40 are Extracellular-facing; it reads MPVLGPERRLLASLSSAPPAAPRLGLAANQTNQTGPQCLE. Residue asparagine 32 is glycosylated (N-linked (GlcNAc...) asparagine). The chain crosses the membrane as a helical span at residues 41-66; the sequence is VSIPDGLFLSLGLVSLVENVLVVAAI. Topologically, residues 67 to 75 are cytoplasmic; sequence AKNRNLHSP. Residues 76–96 form a helical membrane-spanning segment; the sequence is MYYFVCCLAVSDLLVSVSNVL. Residues 97-121 are Extracellular-facing; sequence ETAVLLLLEAGALAAQAAVVQQLDN. Residues 122-143 form a helical membrane-spanning segment; it reads VMDVLICGSMVSSLCFLGAIAV. Topologically, residues 144–166 are cytoplasmic; it reads DRYVSIFYALRYHSIVTLPRAGR. Residues 167-186 traverse the membrane as a helical segment; sequence AIAAIWAGSVLSSTLFIAYY. The Extracellular segment spans residues 187–194; sequence HHTAVLLG. The helical transmembrane segment at 195–214 threads the bilayer; sequence LVSFFVAMLALMAVLYVHML. The Cytoplasmic segment spans residues 215–243; the sequence is ARACQHGRHIARLHKTQHPTRQGCGLKGA. The chain crosses the membrane as a helical span at residues 244–269; the sequence is ATLTILLGVFLLCWAPFFLHLSLVVL. Residues 270 to 282 are Extracellular-facing; sequence CPQHPTCGCVFKN. Residues 283–303 traverse the membrane as a helical segment; that stretch reads VNLFLALVICNSIVDPLIYAF. Over 304–320 the chain is Cytoplasmic; it reads RSQELRKTLQEVLQCSW.

This sequence belongs to the G-protein coupled receptor 1 family. In terms of assembly, interacts with MGRN1, but does not undergo MGRN1-mediated ubiquitination; this interaction competes with GNAS-binding and thus inhibits agonist-induced cAMP production. Interacts with OPN3; the interaction results in a decrease in MC1R-mediated cAMP signaling and ultimately a decrease in melanin production in melanocytes.

It is found in the cell membrane. Receptor for MSH (alpha, beta and gamma) and ACTH. The activity of this receptor is mediated by G proteins which activate adenylate cyclase. Mediates melanogenesis, the production of eumelanin (black/brown) and phaeomelanin (red/yellow), via regulation of cAMP signaling in melanocytes. This chain is Melanocyte-stimulating hormone receptor (MC1R), found in Sus scrofa (Pig).